Consider the following 82-residue polypeptide: Small ribosomal subunit protein bS20 (82 aa).

This sequence belongs to the bacterial ribosomal protein bS20 family.

Functionally, binds directly to 16S ribosomal RNA. This is Small ribosomal subunit protein bS20 from Streptococcus suis (strain 98HAH33).